A 397-amino-acid chain; its full sequence is Acetate kinase (397 aa).

Asn-8 is a Mg(2+) binding site. Lys-15 serves as a coordination point for ATP. Arg-89 is a binding site for substrate. Asp-146 acts as the Proton donor/acceptor in catalysis. ATP contacts are provided by residues 206 to 210, 283 to 285, and 331 to 335; these read HVGNG, DMR, and GIGEN. Position 383 (Glu-383) interacts with Mg(2+).

This sequence belongs to the acetokinase family. In terms of assembly, homodimer. Requires Mg(2+) as cofactor. Mn(2+) is required as a cofactor.

The protein localises to the cytoplasm. It catalyses the reaction acetate + ATP = acetyl phosphate + ADP. Its pathway is metabolic intermediate biosynthesis; acetyl-CoA biosynthesis; acetyl-CoA from acetate: step 1/2. Its function is as follows. Catalyzes the formation of acetyl phosphate from acetate and ATP. Can also catalyze the reverse reaction. This is Acetate kinase from Streptococcus thermophilus (strain ATCC BAA-491 / LMD-9).